Consider the following 261-residue polypeptide: Sepiapterin reductase (261 aa).

NADP(+) is bound by residues glycine 16–glycine 22, arginine 44–threonine 45, and aspartate 71–leucine 72. Substrate-binding positions include serine 158–leucine 159 and tyrosine 171. Lysine 175 provides a ligand contact to NADP(+). Substrate is bound at residue glycine 200. An NADP(+)-binding site is contributed by leucine 202–histidine 207. Aspartate 258 contributes to the substrate binding site.

It belongs to the sepiapterin reductase family. Homodimer.

It localises to the cytoplasm. It carries out the reaction L-erythro-7,8-dihydrobiopterin + NADP(+) = L-sepiapterin + NADPH + H(+). The enzyme catalyses (6R)-L-erythro-5,6,7,8-tetrahydrobiopterin + 2 NADP(+) = 6-pyruvoyl-5,6,7,8-tetrahydropterin + 2 NADPH + 2 H(+). Catalyzes the final one or two reductions in tetra-hydrobiopterin biosynthesis to form 5,6,7,8-tetrahydrobiopterin. This Xenopus tropicalis (Western clawed frog) protein is Sepiapterin reductase (spr).